A 104-amino-acid chain; its full sequence is MYAVVVTGGKQYKVAEGDVLFVEKLTADVDSTVELDNVLLVGKDNEETVVGKPMVEGAKVTAKVLAQGKAKKVVVFKYKPKKDYRKKQGHRQPYTKIQIEKINA.

The protein belongs to the bacterial ribosomal protein bL21 family. Part of the 50S ribosomal subunit. Contacts protein L20.

Its function is as follows. This protein binds to 23S rRNA in the presence of protein L20. This is Large ribosomal subunit protein bL21 from Clostridium botulinum (strain Kyoto / Type A2).